A 687-amino-acid chain; its full sequence is Macrolide export ATP-binding/permease protein MacB (687 aa).

The ABC transporter domain maps to 6–244 (LKLAAVTRRF…LAEAGVDAAE (239 aa)). 42-49 (GASGSGKS) provides a ligand contact to ATP. Positions 246–256 (AEASEAAVGES) are enriched in low complexity. The disordered stretch occupies residues 246-281 (AEASEAAVGESPTRNRHDTPAPPAAVDTDPHVDTGT). Helical transmembrane passes span 312-332 (LLTM…VAIG), 560-580 (LTLL…IGVM), 617-637 (LVCL…GALF), and 650-670 (AGAI…FGFM).

Belongs to the ABC transporter superfamily. Macrolide exporter (TC 3.A.1.122) family. Homodimer.

The protein localises to the cell inner membrane. Non-canonical ABC transporter that contains transmembrane domains (TMD), which form a pore in the inner membrane, and an ATP-binding domain (NBD), which is responsible for energy generation. Confers resistance against macrolides. The chain is Macrolide export ATP-binding/permease protein MacB from Burkholderia lata (strain ATCC 17760 / DSM 23089 / LMG 22485 / NCIMB 9086 / R18194 / 383).